Reading from the N-terminus, the 682-residue chain is Methionine--tRNA ligase (682 aa).

A 'HIGH' region motif is present at residues P15–H25. The Zn(2+) site is built by C146, C149, C159, and C162. Positions K331–S335 match the 'KMSKS' region motif. Residue K334 participates in ATP binding. A tRNA-binding domain is found at D580–K682.

It belongs to the class-I aminoacyl-tRNA synthetase family. MetG type 1 subfamily. As to quaternary structure, homodimer. It depends on Zn(2+) as a cofactor.

The protein localises to the cytoplasm. The enzyme catalyses tRNA(Met) + L-methionine + ATP = L-methionyl-tRNA(Met) + AMP + diphosphate. Functionally, is required not only for elongation of protein synthesis but also for the initiation of all mRNA translation through initiator tRNA(fMet) aminoacylation. This chain is Methionine--tRNA ligase, found in Haemophilus influenzae (strain PittGG).